The chain runs to 378 residues: CST complex subunit STN1 (378 aa).

Residues 8–195 (MECESSPREE…KVYDQPFRNP (188 aa)) are interaction with CTC1. The OB DNA-binding region spans 64–165 (VDIMGAVISV…EICANIYYKV (102 aa)). Winged helix-turn-helix (wHTH) stretches follow at residues 201 to 305 (EALN…YVTT) and 306 to 378 (KDKD…YAAF).

It belongs to the STN1 family. In terms of assembly, component of the CST complex, composed of TEN1/C17orf106, CTC1/C17orf68 and STN1; in the complex interacts directly with TEN1 and CTC1. Interacts with ACD/TPP1. Interacts with POT1 and POLA1.

The protein localises to the nucleus. It localises to the chromosome. It is found in the telomere. In terms of biological role, component of the CST complex proposed to act as a specialized replication factor promoting DNA replication under conditions of replication stress or natural replication barriers such as the telomere duplex. The CST complex binds single-stranded DNA with high affinity in a sequence-independent manner, while isolated subunits bind DNA with low affinity by themselves. Initially the CST complex has been proposed to protect telomeres from DNA degradation. However, the CST complex has been shown to be involved in several aspects of telomere replication. The CST complex inhibits telomerase and is involved in telomere length homeostasis; it is proposed to bind to newly telomerase-synthesized 3' overhangs and to terminate telomerase action implicating the association with the ACD:POT1 complex thus interfering with its telomerase stimulation activity. The CST complex is also proposed to be involved in fill-in synthesis of the telomeric C-strand probably implicating recruitment and activation of DNA polymerase alpha. The CST complex facilitates recovery from many forms of exogenous DNA damage; seems to be involved in the re-initiation of DNA replication at repaired forks and/or dormant origins. Required for efficicient replication of the duplex region of the telomere. Promotes efficient replication of lagging-strand telomeres. Promotes general replication start following replication-fork stalling implicating new origin firing. May be in involved in C-strand fill-in during late S/G2 phase independent of its role in telomere duplex replication. The protein is CST complex subunit STN1 of Mus musculus (Mouse).